A 271-amino-acid polypeptide reads, in one-letter code: Putative pyruvate, phosphate dikinase regulatory protein 2 (271 aa).

151–158 (GVSRTSKT) provides a ligand contact to ADP.

Belongs to the pyruvate, phosphate/water dikinase regulatory protein family. PDRP subfamily.

The enzyme catalyses N(tele)-phospho-L-histidyl/L-threonyl-[pyruvate, phosphate dikinase] + ADP = N(tele)-phospho-L-histidyl/O-phospho-L-threonyl-[pyruvate, phosphate dikinase] + AMP + H(+). It carries out the reaction N(tele)-phospho-L-histidyl/O-phospho-L-threonyl-[pyruvate, phosphate dikinase] + phosphate + H(+) = N(tele)-phospho-L-histidyl/L-threonyl-[pyruvate, phosphate dikinase] + diphosphate. Bifunctional serine/threonine kinase and phosphorylase involved in the regulation of the pyruvate, phosphate dikinase (PPDK) by catalyzing its phosphorylation/dephosphorylation. The sequence is that of Putative pyruvate, phosphate dikinase regulatory protein 2 from Staphylococcus haemolyticus (strain JCSC1435).